The chain runs to 583 residues: Moesin/ezrin/radixin homolog 1 (583 aa).

An FERM domain is found at 11–301 (MNVRVTTMDA…GNHELYMRRR (291 aa)). Disordered regions lie at residues 466 to 518 (TTTP…RTLA) and 539 to 558 (RDDTMETANDKIHRENVRQG). Over residues 476-485 (EEEEDNEEEL) the composition is skewed to acidic residues. Positions 496 to 518 (DYSKDFDTDEHIKDPVEERRTLA) are enriched in basic and acidic residues. Thr-564 is modified (phosphothreonine).

In terms of assembly, interacts with cytoskeletal actin.

It localises to the cell junction. The protein localises to the adherens junction. It is found in the cell projection. The protein resides in the microvillus. Its subcellular location is the rhabdomere. It localises to the cell membrane. The protein localises to the cytoplasm. It is found in the cytoskeleton. Involved in connections of major cytoskeletal structures to the plasma membrane. The sequence is that of Moesin/ezrin/radixin homolog 1 from Aedes aegypti (Yellowfever mosquito).